Consider the following 256-residue polypeptide: UPF0246 protein Swoo_1284 (256 aa).

Belongs to the UPF0246 family.

This Shewanella woodyi (strain ATCC 51908 / MS32) protein is UPF0246 protein Swoo_1284.